A 346-amino-acid polypeptide reads, in one-letter code: MPRNDTVRALDWQGDHLKLLDQRRLPAETVWLDCHSAADTADAIRDMVVRGAPAIGIAAAYGVVLAARAAMARRPADWPAAMAADLARLRSARPTAVNLFWALDRMQQVVDSDPADPLAALEAAAVAIHEDDLTANRRMGELGAHLIPAGAGVLTHCNTGSLATGGYGTALGVIRSAWSGKGLSAVYADETRPWLQGARLTAWELVADGIPVRLIAEGAAPLLMQRGRVDWVIVGADRVAANGDTANKIGTYALALACKAHGVKFMVVAPSSTIDLDCPGGDRIPIEERPPEELLWLGDRRVAAEGAGAWNPVFDVTPAELIDVLVTERGVVTDFGGAGVRALING.

Substrate-binding positions include 50–52 (RGA), Arg93, and Gln196. The active-site Proton donor is Asp237. 247–248 (NK) provides a ligand contact to substrate.

It belongs to the eIF-2B alpha/beta/delta subunits family. MtnA subfamily.

The catalysed reaction is 5-(methylsulfanyl)-alpha-D-ribose 1-phosphate = 5-(methylsulfanyl)-D-ribulose 1-phosphate. The protein operates within amino-acid biosynthesis; L-methionine biosynthesis via salvage pathway; L-methionine from S-methyl-5-thio-alpha-D-ribose 1-phosphate: step 1/6. In terms of biological role, catalyzes the interconversion of methylthioribose-1-phosphate (MTR-1-P) into methylthioribulose-1-phosphate (MTRu-1-P). In Alkalilimnicola ehrlichii (strain ATCC BAA-1101 / DSM 17681 / MLHE-1), this protein is Methylthioribose-1-phosphate isomerase.